The primary structure comprises 503 residues: ATP synthase subunit alpha (503 aa).

170–177 (GDRKTGKT) is an ATP binding site.

It belongs to the ATPase alpha/beta chains family. As to quaternary structure, F-type ATPases have 2 components, CF(1) - the catalytic core - and CF(0) - the membrane proton channel. CF(1) has five subunits: alpha(3), beta(3), gamma(1), delta(1), epsilon(1). CF(0) has four main subunits: a, b, b' and c.

The protein resides in the cellular thylakoid membrane. It carries out the reaction ATP + H2O + 4 H(+)(in) = ADP + phosphate + 5 H(+)(out). In terms of biological role, produces ATP from ADP in the presence of a proton gradient across the membrane. The alpha chain is a regulatory subunit. This is ATP synthase subunit alpha from Gloeothece citriformis (strain PCC 7424) (Cyanothece sp. (strain PCC 7424)).